Here is a 140-residue protein sequence, read N- to C-terminus: Probable glycine cleavage system H protein (140 aa).

The Lipoyl-binding domain maps to 22 to 114; sequence RAIIGITSYA…YEEGWIVVLE (93 aa). Lys-63 carries the N6-lipoyllysine modification.

Belongs to the GcvH family. As to quaternary structure, the glycine cleavage system is composed of four proteins: P, T, L and H. The cofactor is (R)-lipoate.

In terms of biological role, the glycine cleavage system catalyzes the degradation of glycine. The H protein shuttles the methylamine group of glycine from the P protein to the T protein. This Korarchaeum cryptofilum (strain OPF8) protein is Probable glycine cleavage system H protein.